Consider the following 219-residue polypeptide: UPF0502 protein Ppro_2903 (219 aa).

Belongs to the UPF0502 family.

The polypeptide is UPF0502 protein Ppro_2903 (Pelobacter propionicus (strain DSM 2379 / NBRC 103807 / OttBd1)).